A 247-amino-acid chain; its full sequence is MSQEPDRLFAQPLAEVPDFVFNEDVVRVFPDMIKRSVPGYPTIVENIGVLAGQFAQPHTTLYDLGASLGAVTQALRRHVRIDGCKVIAVDNSPAMVARCSEYLHAQDAMFQELLPVEVIEADILALDLQPTSLVTLNFTLQFIPPERRLELLTRIRQALLPGGALILSEKLRFEDAAEHELLTELHVAFKRANGYSELEIAQKRSAIEKVMLPDSLEQHRERLLAAGFSKVVPWFQCLNFASLVALP.

Residues Tyr-40, 65 to 67 (GAS), 90 to 91 (DN), 122 to 123 (DI), Asn-137, and Arg-204 each bind S-adenosyl-L-methionine.

Belongs to the class I-like SAM-binding methyltransferase superfamily. Cx-SAM synthase family. As to quaternary structure, homodimer.

The catalysed reaction is prephenate + S-adenosyl-L-methionine = carboxy-S-adenosyl-L-methionine + 3-phenylpyruvate + H2O. Functionally, catalyzes the conversion of S-adenosyl-L-methionine (SAM) to carboxy-S-adenosyl-L-methionine (Cx-SAM). This chain is Carboxy-S-adenosyl-L-methionine synthase, found in Ectopseudomonas mendocina (strain ymp) (Pseudomonas mendocina).